A 372-amino-acid chain; its full sequence is Lung adenoma susceptibility protein 2 (372 aa).

Residues 1–31 (MAKSKTKHRLCSQESSVSALLASCTLSGSNS) form the signal peptide. Position 161 is a phosphoserine (Ser-161). The disordered stretch occupies residues 248–268 (KSPVPVNSDDSPQQTSRAKSA). The span at 255 to 265 (SDDSPQQTSRA) shows a compositional bias: polar residues.

Its subcellular location is the secreted. Functionally, might play a role in cell proliferation. This is Lung adenoma susceptibility protein 2 (LAS2) from Homo sapiens (Human).